A 750-amino-acid chain; its full sequence is K(+)-insensitive pyrophosphate-energized proton pump (750 aa).

Transmembrane regions (helical) follow at residues 1-21 (MYGL…YQGI), 51-71 (FIII…GGLN), 78-98 (VVFI…VAWF), 133-153 (IGML…LFIP), and 161-181 (FIGF…AGGI). Lys184 serves as a coordination point for substrate. 3 residues coordinate Mg(2+): Asp187, Asp191, and Asp216. 6 helical membrane passes run 227–247 (DGFE…LLAI), 257–277 (LVWI…SYWV), 301–321 (LVWL…YMLI), 327–347 (GTMW…GALI), 391–411 (WMGL…TLGL), and 420–440 (VFAF…TIAV). Asp448 is a binding site for Mg(2+). Helical transmembrane passes span 503 to 523 (VLIG…IMIL), 538 to 558 (ILWP…YWFT), 607 to 627 (GMIN…CLES), and 629 to 649 (LFIG…IFMA). Asp656, Asp681, and Asp685 together coordinate Ca(2+). Lys688 is a binding site for substrate. The next 2 helical transmembrane spans lie at 694-714 (ALNP…ELAI) and 716-736 (LPTT…LVFV).

This sequence belongs to the H(+)-translocating pyrophosphatase (TC 3.A.10) family. K(+)-insensitive subfamily. As to quaternary structure, homodimer. It depends on Mg(2+) as a cofactor.

Its subcellular location is the cell inner membrane. The catalysed reaction is diphosphate + H2O + H(+)(in) = 2 phosphate + 2 H(+)(out). Proton pump that utilizes the energy of pyrophosphate hydrolysis as the driving force for proton movement across the membrane. Generates a proton motive force. This Chlorobaculum tepidum (strain ATCC 49652 / DSM 12025 / NBRC 103806 / TLS) (Chlorobium tepidum) protein is K(+)-insensitive pyrophosphate-energized proton pump.